A 364-amino-acid polypeptide reads, in one-letter code: tRNA 2-selenouridine synthase (364 aa).

The Rhodanese domain maps to 14–137; it reads LIADTPIIDV…LRQTAIQATI (124 aa). Residue Cys-97 is the S-selanylcysteine intermediate of the active site.

This sequence belongs to the SelU family. In terms of assembly, monomer.

It carries out the reaction 5-methylaminomethyl-2-thiouridine(34) in tRNA + selenophosphate + (2E)-geranyl diphosphate + H2O + H(+) = 5-methylaminomethyl-2-selenouridine(34) in tRNA + (2E)-thiogeraniol + phosphate + diphosphate. The enzyme catalyses 5-methylaminomethyl-2-thiouridine(34) in tRNA + (2E)-geranyl diphosphate = 5-methylaminomethyl-S-(2E)-geranyl-thiouridine(34) in tRNA + diphosphate. It catalyses the reaction 5-methylaminomethyl-S-(2E)-geranyl-thiouridine(34) in tRNA + selenophosphate + H(+) = 5-methylaminomethyl-2-(Se-phospho)selenouridine(34) in tRNA + (2E)-thiogeraniol. The catalysed reaction is 5-methylaminomethyl-2-(Se-phospho)selenouridine(34) in tRNA + H2O = 5-methylaminomethyl-2-selenouridine(34) in tRNA + phosphate. Involved in the post-transcriptional modification of the uridine at the wobble position (U34) of tRNA(Lys), tRNA(Glu) and tRNA(Gln). Catalyzes the conversion of 2-thiouridine (S2U-RNA) to 2-selenouridine (Se2U-RNA). Acts in a two-step process involving geranylation of 2-thiouridine (S2U) to S-geranyl-2-thiouridine (geS2U) and subsequent selenation of the latter derivative to 2-selenouridine (Se2U) in the tRNA chain. The polypeptide is tRNA 2-selenouridine synthase (Shigella flexneri).